The primary structure comprises 193 residues: dCTP deaminase, dUMP-forming (193 aa).

Residues 101-106 (KSSLGR), Asp119, 127-129 (TLE), Gln148, Tyr162, and Gln174 contribute to the dCTP site. The active-site Proton donor/acceptor is Glu129. The interval 160–193 (TPYGSGSLGSKYQGQRGPTPSKGYLNFSSEQDSD) is disordered. The segment covering 167–177 (LGSKYQGQRGP) has biased composition (polar residues).

It belongs to the dCTP deaminase family. In terms of assembly, homotrimer.

The enzyme catalyses dCTP + 2 H2O = dUMP + NH4(+) + diphosphate. It participates in pyrimidine metabolism; dUMP biosynthesis; dUMP from dCTP: step 1/1. In terms of biological role, bifunctional enzyme that catalyzes both the deamination of dCTP to dUTP and the hydrolysis of dUTP to dUMP without releasing the toxic dUTP intermediate. The chain is dCTP deaminase, dUMP-forming from Corynebacterium efficiens (strain DSM 44549 / YS-314 / AJ 12310 / JCM 11189 / NBRC 100395).